The following is a 419-amino-acid chain: GTPase Obg (419 aa).

In terms of domain architecture, Obg spans Met1–Ile156. Residues Ala157–Glu325 enclose the OBG-type G domain. Residues Gly163–Ser170, Phe188–Ala192, Asp209–Gly212, Asn279–Asp282, and Ser306–Ala308 contribute to the GTP site. Mg(2+) is bound by residues Ser170 and Thr190. One can recognise an OCT domain in the interval Lys342–Lys419.

The protein belongs to the TRAFAC class OBG-HflX-like GTPase superfamily. OBG GTPase family. In terms of assembly, monomer. It depends on Mg(2+) as a cofactor.

The protein localises to the cytoplasm. In terms of biological role, an essential GTPase which binds GTP, GDP and possibly (p)ppGpp with moderate affinity, with high nucleotide exchange rates and a fairly low GTP hydrolysis rate. Plays a role in control of the cell cycle, stress response, ribosome biogenesis and in those bacteria that undergo differentiation, in morphogenesis control. The chain is GTPase Obg from Endomicrobium trichonymphae.